A 421-amino-acid polypeptide reads, in one-letter code: UDP-N-acetylglucosamine 1-carboxyvinyltransferase (421 aa).

22–23 (KN) provides a ligand contact to phosphoenolpyruvate. A UDP-N-acetyl-alpha-D-glucosamine-binding site is contributed by Arg-93. Cys-117 serves as the catalytic Proton donor. Cys-117 is subject to 2-(S-cysteinyl)pyruvic acid O-phosphothioketal. UDP-N-acetyl-alpha-D-glucosamine is bound by residues 122–126 (RPVDL), Asp-308, and Val-330.

Belongs to the EPSP synthase family. MurA subfamily.

It is found in the cytoplasm. The catalysed reaction is phosphoenolpyruvate + UDP-N-acetyl-alpha-D-glucosamine = UDP-N-acetyl-3-O-(1-carboxyvinyl)-alpha-D-glucosamine + phosphate. Its pathway is cell wall biogenesis; peptidoglycan biosynthesis. In terms of biological role, cell wall formation. Adds enolpyruvyl to UDP-N-acetylglucosamine. The polypeptide is UDP-N-acetylglucosamine 1-carboxyvinyltransferase (Pseudomonas aeruginosa (strain LESB58)).